Consider the following 417-residue polypeptide: Serine hydroxymethyltransferase 3 (417 aa).

(6S)-5,6,7,8-tetrahydrofolate-binding positions include L121 and G125–L127. Position 229 is an N6-(pyridoxal phosphate)lysine (K229). Residue S354 to F356 coordinates (6S)-5,6,7,8-tetrahydrofolate.

This sequence belongs to the SHMT family. As to quaternary structure, homodimer. The cofactor is pyridoxal 5'-phosphate.

It localises to the cytoplasm. The catalysed reaction is (6R)-5,10-methylene-5,6,7,8-tetrahydrofolate + glycine + H2O = (6S)-5,6,7,8-tetrahydrofolate + L-serine. It participates in one-carbon metabolism; tetrahydrofolate interconversion. The protein operates within amino-acid biosynthesis; glycine biosynthesis; glycine from L-serine: step 1/1. Its function is as follows. Catalyzes the reversible interconversion of serine and glycine with tetrahydrofolate (THF) serving as the one-carbon carrier. This reaction serves as the major source of one-carbon groups required for the biosynthesis of purines, thymidylate, methionine, and other important biomolecules. Also exhibits THF-independent aldolase activity toward beta-hydroxyamino acids, producing glycine and aldehydes, via a retro-aldol mechanism. This chain is Serine hydroxymethyltransferase 3, found in Pseudomonas aeruginosa (strain ATCC 15692 / DSM 22644 / CIP 104116 / JCM 14847 / LMG 12228 / 1C / PRS 101 / PAO1).